The following is a 27-amino-acid chain: Allergen C-C (27 aa).

The protein belongs to the protease inhibitor I6 (cereal trypsin/alpha-amylase inhibitor) family.

It is found in the secreted. This is Allergen C-C from Triticum aestivum (Wheat).